A 436-amino-acid chain; its full sequence is Glutamate-1-semialdehyde 2,1-aminomutase 2 (436 aa).

The residue at position 271 (Lys271) is an N6-(pyridoxal phosphate)lysine.

This sequence belongs to the class-III pyridoxal-phosphate-dependent aminotransferase family. HemL subfamily. As to quaternary structure, homodimer. Requires pyridoxal 5'-phosphate as cofactor.

The protein localises to the cytoplasm. The enzyme catalyses (S)-4-amino-5-oxopentanoate = 5-aminolevulinate. It functions in the pathway porphyrin-containing compound metabolism; protoporphyrin-IX biosynthesis; 5-aminolevulinate from L-glutamyl-tRNA(Glu): step 2/2. The protein is Glutamate-1-semialdehyde 2,1-aminomutase 2 of Exiguobacterium sibiricum (strain DSM 17290 / CCUG 55495 / CIP 109462 / JCM 13490 / 255-15).